A 568-amino-acid chain; its full sequence is 2-succinyl-5-enolpyruvyl-6-hydroxy-3-cyclohexene-1-carboxylate synthase (568 aa).

The protein belongs to the TPP enzyme family. MenD subfamily. In terms of assembly, homodimer. Requires Mg(2+) as cofactor. Mn(2+) is required as a cofactor. Thiamine diphosphate serves as cofactor.

The catalysed reaction is isochorismate + 2-oxoglutarate + H(+) = 5-enolpyruvoyl-6-hydroxy-2-succinyl-cyclohex-3-ene-1-carboxylate + CO2. Its pathway is quinol/quinone metabolism; 1,4-dihydroxy-2-naphthoate biosynthesis; 1,4-dihydroxy-2-naphthoate from chorismate: step 2/7. It participates in quinol/quinone metabolism; menaquinone biosynthesis. Catalyzes the thiamine diphosphate-dependent decarboxylation of 2-oxoglutarate and the subsequent addition of the resulting succinic semialdehyde-thiamine pyrophosphate anion to isochorismate to yield 2-succinyl-5-enolpyruvyl-6-hydroxy-3-cyclohexene-1-carboxylate (SEPHCHC). The sequence is that of 2-succinyl-5-enolpyruvyl-6-hydroxy-3-cyclohexene-1-carboxylate synthase from Haemophilus influenzae (strain ATCC 51907 / DSM 11121 / KW20 / Rd).